Consider the following 557-residue polypeptide: Formate--tetrahydrofolate ligase 2 (557 aa).

Position 66 to 73 (66 to 73) interacts with ATP; it reads TPAGEGKT.

The protein belongs to the formate--tetrahydrofolate ligase family.

The catalysed reaction is (6S)-5,6,7,8-tetrahydrofolate + formate + ATP = (6R)-10-formyltetrahydrofolate + ADP + phosphate. The protein operates within one-carbon metabolism; tetrahydrofolate interconversion. The protein is Formate--tetrahydrofolate ligase 2 of Streptococcus pyogenes serotype M12 (strain MGAS9429).